Consider the following 708-residue polypeptide: Ubiquitin thioesterase ZRANB1 (708 aa).

The RanBP2-type 1 zinc finger occupies 3–33 (ERGIKWACEYCTYENWPSAIKCTMCRAQRPS). Zn(2+) is bound by residues Cys-10, Cys-13, Cys-24, and Cys-27. A disordered region spans residues 38–73 (TEDPFKSGSSDVGRDWDPSSTEGGSSPLICPDSSAR). 2 RanBP2-type zinc fingers span residues 84–113 (NANKWSCHMCTYLNWPRAIRCTQCLSQRRT) and 149–178 (RTQHWTCSVCTYENWAKAKRCVVCDHPRPN). Residues Cys-90, Cys-93, Cys-104, Cys-107, Cys-155, Cys-158, Cys-169, and Cys-172 each coordinate Zn(2+). Residues 200 to 225 (RARWRGSCSSGNSQRRSPPATKRDSE) are disordered. Residues 206–215 (SCSSGNSQRR) show a composition bias toward polar residues. 2 ANK repeats span residues 260 to 290 (KKTDWLFLNACVGVVEGDLAAIEAYKSSGGD) and 313 to 340 (YTLVHLAIRFQRQDMLAILLTEVSQQAA). The segment at 392–641 (PTVQEKLFDE…LSAQELGNEE (250 aa)) is TRAF-binding. Residues 432–592 (LYALWNRTAG…RGHFSALVAM (161 aa)) form the OTU domain. Catalysis depends on Cys-443, which acts as the Nucleophile. The Proton acceptor role is filled by His-585.

This sequence belongs to the peptidase C64 family. Interacts with TRAF6. Interacts with APC. In terms of tissue distribution, widely expressed.

It is found in the cytoplasm. It localises to the nucleus. It catalyses the reaction Thiol-dependent hydrolysis of ester, thioester, amide, peptide and isopeptide bonds formed by the C-terminal Gly of ubiquitin (a 76-residue protein attached to proteins as an intracellular targeting signal).. Its function is as follows. Ubiquitin thioesterase, which specifically hydrolyzes 'Lys-29'-linked and 'Lys-33'-linked diubiquitin. Also cleaves 'Lys-63'-linked chains, but with 40-fold less efficiency compared to 'Lys-29'-linked ones. Positive regulator of the Wnt signaling pathway that deubiquitinates APC protein, a negative regulator of Wnt-mediated transcription. Acts as a regulator of autophagy by mediating deubiquitination of PIK3C3/VPS34, thereby promoting autophagosome maturation. Plays a role in the regulation of cell morphology and cytoskeletal organization. Required in the stress fiber dynamics and cell migration. This Homo sapiens (Human) protein is Ubiquitin thioesterase ZRANB1.